A 132-amino-acid chain; its full sequence is Damage-regulated import facilitator 1 (132 aa).

Disordered regions lie at residues 1 to 41 (MDAQ…LMTV) and 108 to 132 (SLEK…KRRL). Over residues 16–31 (QLQQQQQQEQQQQQQQ) the composition is skewed to low complexity. The span at 108-123 (SLEKWDVAEPAAEHEA) shows a compositional bias: basic and acidic residues.

The protein belongs to the DIF1/spd1 family. As to quaternary structure, interacts with RNR2 and RNR4. Post-translationally, phosphorylated by DUN1 in response to DNA damage which leads to its degradation.

It is found in the cytoplasm. Its subcellular location is the nucleus. Functionally, mediates the nuclear localization of RNR2 and RNR4, 2 subunits of the ribonucleotide reductase. This Saccharomyces cerevisiae (strain JAY291) (Baker's yeast) protein is Damage-regulated import facilitator 1 (DIF1).